The sequence spans 104 residues: Replication restart protein PriB (104 aa).

An SSB domain is found at 1–101; sequence MTNRLVLSGT…LHAEQIELID (101 aa).

The protein belongs to the PriB family. Homodimer. Interacts with PriA and DnaT. Component of the replication restart primosome. Primosome assembly occurs via a 'hand-off' mechanism. PriA binds to replication forks, subsequently PriB then DnaT bind; DnaT then displaces ssDNA to generate the helicase loading substrate.

Involved in the restart of stalled replication forks, which reloads the replicative helicase on sites other than the origin of replication; the PriA-PriB pathway is the major replication restart pathway. During primosome assembly it facilitates complex formation between PriA and DnaT on DNA; stabilizes PriA on DNA. Stimulates the DNA unwinding activity of PriA helicase. The protein is Replication restart protein PriB of Escherichia coli (strain ATCC 8739 / DSM 1576 / NBRC 3972 / NCIMB 8545 / WDCM 00012 / Crooks).